The chain runs to 353 residues: Sulfate/thiosulfate import ATP-binding protein CysA (353 aa).

The 235-residue stretch at 3–237 (IQVKNIEKHF…PATPFVFDFL (235 aa)) folds into the ABC transporter domain. 35–42 (GPSGCGKT) contributes to the ATP binding site.

This sequence belongs to the ABC transporter superfamily. Sulfate/tungstate importer (TC 3.A.1.6) family. In terms of assembly, the complex is composed of two ATP-binding proteins (CysA), two transmembrane proteins (CysT and CysW) and a solute-binding protein (CysP).

Its subcellular location is the cell inner membrane. The catalysed reaction is sulfate(out) + ATP + H2O = sulfate(in) + ADP + phosphate + H(+). The enzyme catalyses thiosulfate(out) + ATP + H2O = thiosulfate(in) + ADP + phosphate + H(+). Functionally, part of the ABC transporter complex CysAWTP involved in sulfate/thiosulfate import. Responsible for energy coupling to the transport system. The chain is Sulfate/thiosulfate import ATP-binding protein CysA from Acinetobacter baylyi (strain ATCC 33305 / BD413 / ADP1).